Reading from the N-terminus, the 206-residue chain is Ribosome maturation factor RimP (206 aa).

Belongs to the RimP family.

The protein localises to the cytoplasm. Its function is as follows. Required for maturation of 30S ribosomal subunits. This Paracoccus denitrificans (strain Pd 1222) protein is Ribosome maturation factor RimP.